The chain runs to 422 residues: MSSSSSLSSSTTTATTTSARIRLPSISELTSRSTISGGSNNGNGSALKSQISPRLSDTSRILPSILKNTSGSSTPTSSSTPFKCPPIKSTVGGTLSSGNTQSNYVLGNTKINSLPRLSSPTLPVKVQPQQQPQLPPASSLSPVTRVINTPPQQPQSVSASTSPNTQYQYYQYQQQSSPIQQQQQQQQATPAATPTVMQMAQNQPSHPAPLQYATQQYYPQPVYYQSPAGVPPPPPSVTHQGHIIAVHQHPGHLPQVGVNGMPPNVGYTIVQPEIVNKSTNRCHRCGTTETPEWRRGPKGVRTLCNACGLFHAKLVKRKGAALAAEEVLNNKVTKGKNGRRISMKKHLLNESLKQQQQINGVGIPINGFNHQILPPSFKPQQGGIATLPPLMHGQYPNNVNNLVIHQPPPQQQQQQQQHNNIC.

2 stretches are compositionally biased toward low complexity: residues Met1 to Ala19 and Ser36 to Ser45. Disordered stretches follow at residues Met1 to Pro86 and Arg116 to Pro207. Over residues Ala46–Ile61 the composition is skewed to polar residues. Low complexity-rich tracts occupy residues Thr69 to Pro81 and Pro120 to Val143. Polar residues predominate over residues Val146–Ala159. Low complexity predominate over residues Ser160 to Pro194. Residues Thr195–Ser205 show a composition bias toward polar residues. The GATA-type zinc-finger motif lies at Cys282–Cys307.

As to quaternary structure, interacts with HDA1.

It is found in the nucleus. In terms of biological role, transcription factor required for hyphal growth, biofilm formation, and virulence. Promotes formation of both conventional and pheromone-stimulated biofilms. Binds and recruits HDA1 to promoters of hypha-specific genes in a rapamycin-dependent manner. Involved in the switch between two heritable states, the white and opaque states. These two cell types differ in many characteristics, including cell structure, mating competence, and virulence. Each state is heritable for many generations, and switching between states occurs stochastically at low frequency. This chain is Biofilm regulator 1 (BRG1), found in Candida albicans (strain SC5314 / ATCC MYA-2876) (Yeast).